We begin with the raw amino-acid sequence, 389 residues long: Pyruvate synthase subunit PorA (389 aa).

As to quaternary structure, heterotetramer of one alpha, one beta, one delta and one gamma chain.

It carries out the reaction 2 oxidized [2Fe-2S]-[ferredoxin] + pyruvate + CoA = 2 reduced [2Fe-2S]-[ferredoxin] + acetyl-CoA + CO2 + H(+). The sequence is that of Pyruvate synthase subunit PorA (porA) from Methanocaldococcus jannaschii (strain ATCC 43067 / DSM 2661 / JAL-1 / JCM 10045 / NBRC 100440) (Methanococcus jannaschii).